Reading from the N-terminus, the 161-residue chain is V-type proton ATPase 16 kDa proteolipid subunit c 2 (161 aa).

The Lumenal portion of the chain corresponds to 1 to 15; sequence MSYDLETAEHAAYAP. The helical transmembrane segment at 16–36 threads the bilayer; that stretch reads FFGYMGAASAQIFTVLGAAYG. Topologically, residues 37–58 are cytoplasmic; that stretch reads TAKSAVGICSMGVMRPELIMKS. The chain crosses the membrane as a helical span at residues 59–79; it reads VIPVIMAGIIGIYGLVVAMVL. The Lumenal portion of the chain corresponds to 80 to 98; the sequence is KGKVQAASAGYDLNKGFAH. Residues 99 to 119 traverse the membrane as a helical segment; it reads LAAGLTCGLCGLGAGYAIGIV. At 120-137 the chain is on the cytoplasmic side; the sequence is GDAGVRGTAQQPRLFVGM. A helical transmembrane segment spans residues 138–158; it reads ILILIFSEVLGLYGMIVALIL. The Lumenal portion of the chain corresponds to 159–161; that stretch reads GTS.

Belongs to the V-ATPase proteolipid subunit family. V-ATPase is a heteromultimeric enzyme made up of two complexes: the ATP-hydrolytic V1 complex and the proton translocation V0 complex. The V1 complex consists of three catalytic AB heterodimers that form a heterohexamer, three peripheral stalks each consisting of EG heterodimers, one central rotor including subunits D and F, and the regulatory subunits C and H. The proton translocation complex V0 consists of the proton transport subunit a, a ring of proteolipid subunits c9c'', rotary subunit d, subunits e and f, and the accessory subunits vah-19/Ac45 and vah-20/PRR.

It is found in the membrane. In terms of biological role, proton-conducting pore forming subunit of the V0 complex of vacuolar(H+)-ATPase (V-ATPase), a multisubunit enzyme composed of a peripheral complex (V1) that hydrolyzes ATP and a membrane integral complex (V0) that translocates protons. V-ATPase is responsible for acidifying and maintaining the pH of intracellular compartments and in some cell types, is targeted to the plasma membrane, where it is responsible for acidifying the extracellular environment. Involved in necrotic cell death. Required along with other vacuolar ATPase components for the removal of protein aggregates which form in immature oocytes in the distal gonad. This removal occurs as the oocytes mature and move to the proximal gonad, is triggered by the introduction of sperm through mating and occurs before fertilization. The introduction of sperm triggers V-ATPase accumulation in proximal oocytes and induces lysosomal acidification which leads to engulfing of protein aggregates by lysosomes and subsequent clearance of the aggregates. Lysosomal acidification also leads to changes in mitochondrial morphology and function. Mitochondria in distal immature oocytes are fragmented, produce high levels of reactive oxygen species (ROS) and have high membrane potential, indicative of metabolic inactivity. In contrast, mitochondria in proximal mature oocytes are tubular with lower ROS levels and membrane potential, indicative of an active metabolic state required for aggregate mobilization before clearance. This is V-type proton ATPase 16 kDa proteolipid subunit c 2 from Caenorhabditis briggsae.